We begin with the raw amino-acid sequence, 156 residues long: Small ribosomal subunit protein uS7 (156 aa).

Belongs to the universal ribosomal protein uS7 family. Part of the 30S ribosomal subunit. Contacts proteins S9 and S11.

Its function is as follows. One of the primary rRNA binding proteins, it binds directly to 16S rRNA where it nucleates assembly of the head domain of the 30S subunit. Is located at the subunit interface close to the decoding center, probably blocks exit of the E-site tRNA. The sequence is that of Small ribosomal subunit protein uS7 from Nocardioides sp. (strain ATCC BAA-499 / JS614).